A 411-amino-acid chain; its full sequence is Probable 26S proteasome regulatory subunit rpn-6.2 (411 aa).

The 170-residue stretch at 212-381 (YKTSFSYFYE…DTVVIYPKAG (170 aa)) folds into the PCI domain.

This sequence belongs to the proteasome subunit S9 family. In terms of assembly, component of the lid subcomplex of the 19S proteasome regulatory particle complex (also named PA700 complex). The 26S proteasome consists of a 20S proteasome core and two 19S regulatory subunits.

Functionally, component of the lid subcomplex of the 26S proteasome, a multiprotein complex involved in the ATP-dependent degradation of ubiquitinated proteins. In the complex, rpn-6.2 is required for proteasome assembly. In Caenorhabditis briggsae, this protein is Probable 26S proteasome regulatory subunit rpn-6.2.